The following is a 350-amino-acid chain: Neutral protease 2 homolog SNOG_10522 (350 aa).

A signal peptide spans Met1–Ala18. The propeptide occupies Ala19 to Ile180. Intrachain disulfides connect Cys184–Cys251 and Cys258–Cys276. His301 is a Zn(2+) binding site. Residue Glu302 is part of the active site. Zn(2+)-binding residues include His305 and Asp316.

The protein belongs to the peptidase M35 family. Requires Zn(2+) as cofactor.

It is found in the secreted. It catalyses the reaction Preferential cleavage of bonds with hydrophobic residues in P1'. Also 3-Asn-|-Gln-4 and 8-Gly-|-Ser-9 bonds in insulin B chain.. Its function is as follows. Secreted metalloproteinase that allows assimilation of proteinaceous substrates. Shows high activities on basic nuclear substrates such as histone and protamine. The sequence is that of Neutral protease 2 homolog SNOG_10522 from Phaeosphaeria nodorum (strain SN15 / ATCC MYA-4574 / FGSC 10173) (Glume blotch fungus).